The sequence spans 765 residues: Myotubularin-related protein 10-A (765 aa).

A Myotubularin phosphatase domain is found at 209 to 650 (FETYSDWDRE…THIKLWKLCY (442 aa)).

It belongs to the protein-tyrosine phosphatase family. Non-receptor class myotubularin subfamily.

The chain is Myotubularin-related protein 10-A (mtmr10-a) from Xenopus laevis (African clawed frog).